We begin with the raw amino-acid sequence, 441 residues long: Peroxisomal multifunctional enzyme A (441 aa).

A 3-hydroxyacyl-CoA dehydrogenase region spans residues 1 to 302 (MALNFKDKVV…VNSKPADGES (302 aa)). Residues 11–35 (IVTG…AKVV), Ile-19, Asp-38, 73–74 (SV), and Asn-97 each bind NAD(+). A substrate-binding site is contributed by Ser-149. The Proton acceptor role is filled by Tyr-162. Residues 162-166 (YGSMK) and 194-197 (AASR) each bind NAD(+). Positions 331 to 440 (ASKIFTTIQG…KLGALMQGSK (110 aa)) constitute an SCP2 domain. Residue Gln-412 participates in substrate binding.

The protein belongs to the short-chain dehydrogenases/reductases (SDR) family.

The protein resides in the peroxisome. The catalysed reaction is a (3S)-3-hydroxyacyl-CoA + NAD(+) = a 3-oxoacyl-CoA + NADH + H(+). It functions in the pathway lipid metabolism; fatty acid beta-oxidation. Its function is as follows. Enzyme acting on the peroxisomal beta-oxidation pathway for fatty acids. Protects the cells from the increase of the harmful xenobiotic fatty acids incorporated from their diets and optimizes cellular lipid composition for proper development. This Dictyostelium discoideum (Social amoeba) protein is Peroxisomal multifunctional enzyme A (mfeA).